The primary structure comprises 190 residues: Putative triphosphatase YjbK (190 aa).

One can recognise a CYTH domain in the interval glutamate 4–serine 189.

This Bacillus subtilis (strain 168) protein is Putative triphosphatase YjbK (yjbK).